Consider the following 181-residue polypeptide: Ribulose bisphosphate carboxylase small subunit, chloroplastic (181 aa).

The N-terminal 54 residues, 1-54, are a transit peptide targeting the chloroplast; that stretch reads MASSMLSSAAVVTSQLQATMVAPFTGLKSSAAFPVTRKTNTDITSIASNGGRVS.

Belongs to the RuBisCO small chain family. In terms of assembly, heterohexadecamer of 8 large and 8 small subunits.

It localises to the plastid. It is found in the chloroplast. RuBisCO catalyzes two reactions: the carboxylation of D-ribulose 1,5-bisphosphate, the primary event in carbon dioxide fixation, as well as the oxidative fragmentation of the pentose substrate. Both reactions occur simultaneously and in competition at the same active site. Although the small subunit is not catalytic it is essential for maximal activity. The chain is Ribulose bisphosphate carboxylase small subunit, chloroplastic from Raphanus sativus (Radish).